The chain runs to 446 residues: Phosphoglucosamine mutase (446 aa).

Catalysis depends on Ser-88, which acts as the Phosphoserine intermediate. Mg(2+)-binding residues include Ser-88, Asp-231, Asp-233, and Asp-235. Position 88 is a phosphoserine (Ser-88).

The protein belongs to the phosphohexose mutase family. The cofactor is Mg(2+). Activated by phosphorylation.

The catalysed reaction is alpha-D-glucosamine 1-phosphate = D-glucosamine 6-phosphate. Catalyzes the conversion of glucosamine-6-phosphate to glucosamine-1-phosphate. This chain is Phosphoglucosamine mutase, found in Methanococcus vannielii (strain ATCC 35089 / DSM 1224 / JCM 13029 / OCM 148 / SB).